A 143-amino-acid polypeptide reads, in one-letter code: Nucleoside diphosphate kinase (143 aa).

ATP contacts are provided by K11, F59, R87, T93, R104, and N114. H117 functions as the Pros-phosphohistidine intermediate in the catalytic mechanism.

The protein belongs to the NDK family. Homotetramer. Mg(2+) is required as a cofactor.

It is found in the cytoplasm. It catalyses the reaction a 2'-deoxyribonucleoside 5'-diphosphate + ATP = a 2'-deoxyribonucleoside 5'-triphosphate + ADP. The enzyme catalyses a ribonucleoside 5'-diphosphate + ATP = a ribonucleoside 5'-triphosphate + ADP. In terms of biological role, major role in the synthesis of nucleoside triphosphates other than ATP. The ATP gamma phosphate is transferred to the NDP beta phosphate via a ping-pong mechanism, using a phosphorylated active-site intermediate. The sequence is that of Nucleoside diphosphate kinase from Nitrosococcus oceani (strain ATCC 19707 / BCRC 17464 / JCM 30415 / NCIMB 11848 / C-107).